The primary structure comprises 123 residues: Small ribosomal subunit protein uS12c (123 aa).

Residues 103 to 123 (AAGVKNRKQSRSKYGAKKPKE) are disordered. The segment covering 107-123 (KNRKQSRSKYGAKKPKE) has biased composition (basic residues).

This sequence belongs to the universal ribosomal protein uS12 family. As to quaternary structure, part of the 30S ribosomal subunit.

It is found in the plastid. The protein localises to the chloroplast. With S4 and S5 plays an important role in translational accuracy. Located at the interface of the 30S and 50S subunits. The chain is Small ribosomal subunit protein uS12c (rps12) from Guillardia theta (Cryptophyte).